The sequence spans 150 residues: Ribonuclease H (150 aa).

The RNase H type-1 domain occupies 1–141 (MKSIEVHTDG…VDVLARNQAI (141 aa)). Mg(2+) is bound by residues Asp9, Glu47, Asp69, and Asp133.

This sequence belongs to the RNase H family. As to quaternary structure, monomer. Mg(2+) serves as cofactor.

The protein localises to the cytoplasm. The catalysed reaction is Endonucleolytic cleavage to 5'-phosphomonoester.. Endonuclease that specifically degrades the RNA of RNA-DNA hybrids. This chain is Ribonuclease H, found in Xanthomonas axonopodis pv. citri (strain 306).